A 64-amino-acid polypeptide reads, in one-letter code: Small ribosomal subunit protein eS17 (64 aa).

The protein belongs to the eukaryotic ribosomal protein eS17 family.

The chain is Small ribosomal subunit protein eS17 from Methanosarcina mazei (strain ATCC BAA-159 / DSM 3647 / Goe1 / Go1 / JCM 11833 / OCM 88) (Methanosarcina frisia).